The sequence spans 368 residues: Phosphoserine aminotransferase (368 aa).

R44 provides a ligand contact to L-glutamate. Pyridoxal 5'-phosphate contacts are provided by residues 78–79 (AT), W104, T157, D179, and Q202. K203 is modified (N6-(pyridoxal phosphate)lysine). 244-245 (NT) is a pyridoxal 5'-phosphate binding site.

This sequence belongs to the class-V pyridoxal-phosphate-dependent aminotransferase family. SerC subfamily. As to quaternary structure, homodimer. Pyridoxal 5'-phosphate serves as cofactor.

Its subcellular location is the cytoplasm. It carries out the reaction O-phospho-L-serine + 2-oxoglutarate = 3-phosphooxypyruvate + L-glutamate. The enzyme catalyses 4-(phosphooxy)-L-threonine + 2-oxoglutarate = (R)-3-hydroxy-2-oxo-4-phosphooxybutanoate + L-glutamate. The protein operates within amino-acid biosynthesis; L-serine biosynthesis; L-serine from 3-phospho-D-glycerate: step 2/3. It participates in cofactor biosynthesis; pyridoxine 5'-phosphate biosynthesis; pyridoxine 5'-phosphate from D-erythrose 4-phosphate: step 3/5. Functionally, catalyzes the reversible conversion of 3-phosphohydroxypyruvate to phosphoserine and of 3-hydroxy-2-oxo-4-phosphonooxybutanoate to phosphohydroxythreonine. The chain is Phosphoserine aminotransferase from Neisseria meningitidis serogroup C / serotype 2a (strain ATCC 700532 / DSM 15464 / FAM18).